Here is a 253-residue protein sequence, read N- to C-terminus: Imidazole glycerol phosphate synthase subunit HisF (253 aa).

Residues Asp-11 and Asp-130 contribute to the active site.

The protein belongs to the HisA/HisF family. In terms of assembly, heterodimer of HisH and HisF.

The protein resides in the cytoplasm. It catalyses the reaction 5-[(5-phospho-1-deoxy-D-ribulos-1-ylimino)methylamino]-1-(5-phospho-beta-D-ribosyl)imidazole-4-carboxamide + L-glutamine = D-erythro-1-(imidazol-4-yl)glycerol 3-phosphate + 5-amino-1-(5-phospho-beta-D-ribosyl)imidazole-4-carboxamide + L-glutamate + H(+). Its pathway is amino-acid biosynthesis; L-histidine biosynthesis; L-histidine from 5-phospho-alpha-D-ribose 1-diphosphate: step 5/9. IGPS catalyzes the conversion of PRFAR and glutamine to IGP, AICAR and glutamate. The HisF subunit catalyzes the cyclization activity that produces IGP and AICAR from PRFAR using the ammonia provided by the HisH subunit. The protein is Imidazole glycerol phosphate synthase subunit HisF of Clostridium botulinum (strain Langeland / NCTC 10281 / Type F).